Reading from the N-terminus, the 352-residue chain is Protein RecA (352 aa).

67–74 is a binding site for ATP; sequence GPESSGKT.

Belongs to the RecA family.

The protein resides in the cytoplasm. Its function is as follows. Can catalyze the hydrolysis of ATP in the presence of single-stranded DNA, the ATP-dependent uptake of single-stranded DNA by duplex DNA, and the ATP-dependent hybridization of homologous single-stranded DNAs. It interacts with LexA causing its activation and leading to its autocatalytic cleavage. This is Protein RecA from Chlamydia trachomatis serovar A (strain ATCC VR-571B / DSM 19440 / HAR-13).